The primary structure comprises 119 residues: Ribonuclease P protein component (119 aa).

This sequence belongs to the RnpA family. As to quaternary structure, consists of a catalytic RNA component (M1 or rnpB) and a protein subunit.

The enzyme catalyses Endonucleolytic cleavage of RNA, removing 5'-extranucleotides from tRNA precursor.. RNaseP catalyzes the removal of the 5'-leader sequence from pre-tRNA to produce the mature 5'-terminus. It can also cleave other RNA substrates such as 4.5S RNA. The protein component plays an auxiliary but essential role in vivo by binding to the 5'-leader sequence and broadening the substrate specificity of the ribozyme. The polypeptide is Ribonuclease P protein component (Pediococcus pentosaceus (strain ATCC 25745 / CCUG 21536 / LMG 10740 / 183-1w)).